Consider the following 440-residue polypeptide: Tyrosine--tRNA ligase (440 aa).

Tyrosine 46 contacts L-tyrosine. The short motif at 51 to 60 (PTAASLHIGN) is the 'HIGH' region element. Positions 181 and 185 each coordinate L-tyrosine. Residues 241 to 245 (KFGKS) carry the 'KMSKS' region motif. Position 244 (lysine 244) interacts with ATP. One can recognise an S4 RNA-binding domain in the interval 373–439 (DRVIDAAQAA…GKKALGAVEN (67 aa)).

It belongs to the class-I aminoacyl-tRNA synthetase family. TyrS type 1 subfamily. As to quaternary structure, homodimer.

Its subcellular location is the cytoplasm. It carries out the reaction tRNA(Tyr) + L-tyrosine + ATP = L-tyrosyl-tRNA(Tyr) + AMP + diphosphate + H(+). Functionally, catalyzes the attachment of tyrosine to tRNA(Tyr) in a two-step reaction: tyrosine is first activated by ATP to form Tyr-AMP and then transferred to the acceptor end of tRNA(Tyr). This chain is Tyrosine--tRNA ligase, found in Bifidobacterium longum subsp. infantis (strain ATCC 15697 / DSM 20088 / JCM 1222 / NCTC 11817 / S12).